A 245-amino-acid chain; its full sequence is 1-(5-phosphoribosyl)-5-[(5-phosphoribosylamino)methylideneamino] imidazole-4-carboxamide isomerase (245 aa).

The active-site Proton acceptor is Asp-7. Catalysis depends on Asp-129, which acts as the Proton donor.

The protein belongs to the HisA/HisF family.

The protein localises to the cytoplasm. The enzyme catalyses 1-(5-phospho-beta-D-ribosyl)-5-[(5-phospho-beta-D-ribosylamino)methylideneamino]imidazole-4-carboxamide = 5-[(5-phospho-1-deoxy-D-ribulos-1-ylimino)methylamino]-1-(5-phospho-beta-D-ribosyl)imidazole-4-carboxamide. It participates in amino-acid biosynthesis; L-histidine biosynthesis; L-histidine from 5-phospho-alpha-D-ribose 1-diphosphate: step 4/9. In Enterobacter sp. (strain 638), this protein is 1-(5-phosphoribosyl)-5-[(5-phosphoribosylamino)methylideneamino] imidazole-4-carboxamide isomerase.